We begin with the raw amino-acid sequence, 278 residues long: 4-diphosphocytidyl-2-C-methyl-D-erythritol kinase (278 aa).

The active site involves lysine 9. 93 to 103 serves as a coordination point for ATP; sequence PLGGGLGGGSS. The active site involves aspartate 135.

It belongs to the GHMP kinase family. IspE subfamily.

The enzyme catalyses 4-CDP-2-C-methyl-D-erythritol + ATP = 4-CDP-2-C-methyl-D-erythritol 2-phosphate + ADP + H(+). It functions in the pathway isoprenoid biosynthesis; isopentenyl diphosphate biosynthesis via DXP pathway; isopentenyl diphosphate from 1-deoxy-D-xylulose 5-phosphate: step 3/6. In terms of biological role, catalyzes the phosphorylation of the position 2 hydroxy group of 4-diphosphocytidyl-2C-methyl-D-erythritol. The sequence is that of 4-diphosphocytidyl-2-C-methyl-D-erythritol kinase from Nitrosomonas eutropha (strain DSM 101675 / C91 / Nm57).